We begin with the raw amino-acid sequence, 215 residues long: Small ribosomal subunit protein uS7 (215 aa).

The protein belongs to the universal ribosomal protein uS7 family. In terms of assembly, part of the 30S ribosomal subunit.

Its function is as follows. One of the primary rRNA binding proteins, it binds directly to 16S rRNA where it nucleates assembly of the head domain of the 30S subunit. Is located at the subunit interface close to the decoding center. This Thermococcus kodakarensis (strain ATCC BAA-918 / JCM 12380 / KOD1) (Pyrococcus kodakaraensis (strain KOD1)) protein is Small ribosomal subunit protein uS7.